A 232-amino-acid chain; its full sequence is 5'-methylthioadenosine/S-adenosylhomocysteine nucleosidase (232 aa).

Glu-14 functions as the Proton acceptor in the catalytic mechanism. Substrate is bound by residues Gly-80, Val-154, and 175–176 (ME). Asp-199 functions as the Proton donor in the catalytic mechanism.

It belongs to the PNP/UDP phosphorylase family. MtnN subfamily.

The catalysed reaction is S-adenosyl-L-homocysteine + H2O = S-(5-deoxy-D-ribos-5-yl)-L-homocysteine + adenine. It carries out the reaction S-methyl-5'-thioadenosine + H2O = 5-(methylsulfanyl)-D-ribose + adenine. It catalyses the reaction 5'-deoxyadenosine + H2O = 5-deoxy-D-ribose + adenine. It participates in amino-acid biosynthesis; L-methionine biosynthesis via salvage pathway; S-methyl-5-thio-alpha-D-ribose 1-phosphate from S-methyl-5'-thioadenosine (hydrolase route): step 1/2. Functionally, catalyzes the irreversible cleavage of the glycosidic bond in both 5'-methylthioadenosine (MTA) and S-adenosylhomocysteine (SAH/AdoHcy) to adenine and the corresponding thioribose, 5'-methylthioribose and S-ribosylhomocysteine, respectively. Also cleaves 5'-deoxyadenosine, a toxic by-product of radical S-adenosylmethionine (SAM) enzymes, into 5-deoxyribose and adenine. The polypeptide is 5'-methylthioadenosine/S-adenosylhomocysteine nucleosidase (Actinobacillus pleuropneumoniae serotype 5b (strain L20)).